The chain runs to 724 residues: Catalase-peroxidase (724 aa).

Residues 98 to 226 constitute a cross-link (tryptophyl-tyrosyl-methioninium (Trp-Tyr) (with M-252)); sequence WHAAGSYRTA…LAAVQMGLIY (129 aa). The Proton acceptor role is filled by His99. A cross-link (tryptophyl-tyrosyl-methioninium (Tyr-Met) (with W-98)) is located at residues 226–252; the sequence is YVNPQGVNGEPDPLRTALHVRETFARM. His267 serves as a coordination point for heme b.

It belongs to the peroxidase family. Peroxidase/catalase subfamily. In terms of assembly, homodimer or homotetramer. The cofactor is heme b. Formation of the three residue Trp-Tyr-Met cross-link is important for the catalase, but not the peroxidase activity of the enzyme.

It carries out the reaction H2O2 + AH2 = A + 2 H2O. The enzyme catalyses 2 H2O2 = O2 + 2 H2O. In terms of biological role, bifunctional enzyme with both catalase and broad-spectrum peroxidase activity. The chain is Catalase-peroxidase from Cereibacter sphaeroides (strain ATCC 17025 / ATH 2.4.3) (Rhodobacter sphaeroides).